The chain runs to 80 residues: Small ribosomal subunit protein bS16 (80 aa).

It belongs to the bacterial ribosomal protein bS16 family.

The chain is Small ribosomal subunit protein bS16 from Blochmanniella pennsylvanica (strain BPEN).